The chain runs to 512 residues: Glycerol kinase (512 aa).

Residue T14 coordinates ADP. The ATP site is built by T14, T15, and S16. T14 contacts sn-glycerol 3-phosphate. Residue R18 coordinates ADP. Residues R83, E84, Y135, and D244 each coordinate sn-glycerol 3-phosphate. Glycerol is bound by residues R83, E84, Y135, D244, and Q245. 4 residues coordinate ADP: T266, G309, G410, and N414. ATP is bound by residues T266, G309, and G410.

It belongs to the FGGY kinase family.

It catalyses the reaction glycerol + ATP = sn-glycerol 3-phosphate + ADP + H(+). Its pathway is polyol metabolism; glycerol degradation via glycerol kinase pathway; sn-glycerol 3-phosphate from glycerol: step 1/1. With respect to regulation, inhibited by fructose 1,6-bisphosphate (FBP). Key enzyme in the regulation of glycerol uptake and metabolism. Catalyzes the phosphorylation of glycerol to yield sn-glycerol 3-phosphate. The sequence is that of Glycerol kinase from Gluconobacter oxydans (strain 621H) (Gluconobacter suboxydans).